The following is a 96-amino-acid chain: MIEMEFGKELLVYMTFLVVVTPVFVQAIKKTELVPSKWLPTVSILIGAILGALATFLDGSGSLATMIWAGALAGAGGTGLFEQFTNRSKKYGEDDK.

Residues 1–4 lie on the Periplasmic side of the membrane; the sequence is MIEM. 2 consecutive stretches face the cytoplasmic side: residues 1–32 and 26–29; these read MIEM…KKTE and QAIK. Residues 5 to 25 form a helical membrane-spanning segment; that stretch reads EFGKELLVYMTFLVVVTPVFV. The helical transmembrane segment at 33 to 55 threads the bilayer; sequence LVPSKWLPTVSILIGAILGALAT. Residues 56–60 lie on the Periplasmic side of the membrane; it reads FLDGS. The helical transmembrane segment at 61–81 threads the bilayer; sequence GSLATMIWAGALAGAGGTGLF. Over 82–96 the chain is Cytoplasmic; the sequence is EQFTNRSKKYGEDDK.

Homomultimer. Interacts with isoform Antiholin; this interaction blocks the holin homomultimerization and delays host cell lysis.

It is found in the host cell inner membrane. Functionally, accumulates harmlessly in the cytoplasmic membrane until it reaches a critical concentration that triggers the formation of micron-scale pores (holes) causing host cell membrane disruption and endolysin escape into the periplasmic space. Determines the precise timing of host cell lysis. Participates with the endolysin and spanin proteins in the sequential events which lead to the programmed host cell lysis releasing the mature viral particles from the host cell. In terms of biological role, isoform Antiholin: Counteracts the aggregation of the holin molecules and thus of pore formation. In Listeria monocytogenes (Bacteriophage A118), this protein is Putative antiholin (hol).